The sequence spans 37 residues: Calcitonin gene-related peptide (37 aa).

A disulfide bridge links cysteine 2 with cysteine 7. Phenylalanine 37 is subject to Phenylalanine amide.

The protein belongs to the calcitonin family.

In terms of biological role, CGRP induces vasodilation. It dilates a variety of vessels including the coronary, cerebral and systemic vasculature. Its abundance in the CNS also points toward a neurotransmitter or neuromodulator role. This chain is Calcitonin gene-related peptide, found in Pelophylax ridibundus (Marsh frog).